We begin with the raw amino-acid sequence, 588 residues long: Tetratricopeptide repeat protein 39B (588 aa).

3 TPR repeats span residues 294–327 (SIILFYAARIDILKGRFEQAQETFQKCIVSQQEW), 485–518 (CLVQLLKGVCLKHLGRLLQAELCFNQVIQSEKRV), and 526–559 (PFTFYELGLLYKDQGDRDKAIRYIETAKSNYKDY).

Belongs to the TTC39 family.

Functionally, may be involved in lipid metabolism. The polypeptide is Tetratricopeptide repeat protein 39B (ttc39b) (Xenopus tropicalis (Western clawed frog)).